The following is a 568-amino-acid chain: Probable inactive 1-aminocyclopropane-1-carboxylate synthase-like protein 2 (568 aa).

The interval 1 to 21 is disordered; the sequence is MSHRSDTLPVPSGQRRGRVPR. At Lys-395 the chain carries N6-(pyridoxal phosphate)lysine.

It belongs to the class-I pyridoxal-phosphate-dependent aminotransferase family.

In Homo sapiens (Human), this protein is Probable inactive 1-aminocyclopropane-1-carboxylate synthase-like protein 2 (ACCSL).